A 156-amino-acid polypeptide reads, in one-letter code: Putative pre-16S rRNA nuclease (156 aa).

Belongs to the YqgF nuclease family.

It localises to the cytoplasm. Functionally, could be a nuclease involved in processing of the 5'-end of pre-16S rRNA. This chain is Putative pre-16S rRNA nuclease, found in Ehrlichia canis (strain Jake).